The chain runs to 291 residues: G1/S-specific cyclin-D2 (291 aa).

Residues 261 to 291 are disordered; that stretch reads TRQQTQQRNSSKSVDELDQASTPTDVQDINL. The segment covering 279–291 has biased composition (polar residues); sequence QASTPTDVQDINL. Threonine 282 is subject to Phosphothreonine.

Belongs to the cyclin family. Cyclin D subfamily. In terms of assembly, interacts with the cdk4 and cdk6 protein kinases to form a serine/threonine kinase holoenzyme complex. The cyclin subunit imparts substrate specificity to the complex. Post-translationally, phosphorylation at Thr-282 by MAP kinases is required for ubiquitination and degradation by the DCX(AMBRA1) complex. Ubiquitinated by the DCX(AMBRA1) complex during the transition from G1 to S cell phase, leading to its degradation: ubiquitination is dependent on Thr-282 phosphorylation. The DCX(AMBRA1) complex represents the major regulator of CCND2 stability during the G1/S transition.

It is found in the nucleus. The protein resides in the cytoplasm. Its subcellular location is the nucleus membrane. In terms of biological role, regulatory component of the cyclin D2-CDK4 (DC) complex that phosphorylates and inhibits members of the retinoblastoma (RB) protein family including RB1 and regulates the cell-cycle during G(1)/S transition. Phosphorylation of RB1 allows dissociation of the transcription factor E2F from the RB/E2F complex and the subsequent transcription of E2F target genes which are responsible for the progression through the G(1) phase. Hypophosphorylates RB1 in early G(1) phase. Cyclin D-CDK4 complexes are major integrators of various mitogenenic and antimitogenic signals. This Xenopus laevis (African clawed frog) protein is G1/S-specific cyclin-D2 (ccnd2).